Consider the following 331-residue polypeptide: Serine/threonine-protein phosphatase PP1 isozyme 7 (331 aa).

Methionine 1 bears the N-acetylmethionine mark. Mn(2+) contacts are provided by aspartate 60, histidine 62, aspartate 88, and asparagine 120. Histidine 121 (proton donor) is an active-site residue. Mn(2+)-binding residues include histidine 169 and histidine 244.

The protein belongs to the PPP phosphatase family. PP-1 subfamily. It depends on Mn(2+) as a cofactor. Expressed in roots, rosettes and flowers.

It localises to the nucleus. Its subcellular location is the cytoplasm. The catalysed reaction is O-phospho-L-seryl-[protein] + H2O = L-seryl-[protein] + phosphate. It carries out the reaction O-phospho-L-threonyl-[protein] + H2O = L-threonyl-[protein] + phosphate. Its activity is regulated as follows. Phosphatase activity is strongly reduced by the protein phosphatase inhibitor 2 (I-2). Serine/threonine-protein phosphatase that possesses phosphatase activity toward para-nitrophenyl phosphate (pNPP) in vitro. This Arabidopsis thaliana (Mouse-ear cress) protein is Serine/threonine-protein phosphatase PP1 isozyme 7.